A 224-amino-acid polypeptide reads, in one-letter code: Cytochrome c biogenesis ATP-binding export protein CcmA (224 aa).

In terms of domain architecture, ABC transporter spans 1–220 (MQNAEAAPAL…EYAHAEVVGA (220 aa)). 40 to 47 (GANGSGKT) contacts ATP.

The protein belongs to the ABC transporter superfamily. CcmA exporter (TC 3.A.1.107) family. As to quaternary structure, the complex is composed of two ATP-binding proteins (CcmA) and two transmembrane proteins (CcmB).

Its subcellular location is the cell inner membrane. The enzyme catalyses heme b(in) + ATP + H2O = heme b(out) + ADP + phosphate + H(+). Part of the ABC transporter complex CcmAB involved in the biogenesis of c-type cytochromes; once thought to export heme, this seems not to be the case, but its exact role is uncertain. Responsible for energy coupling to the transport system. The protein is Cytochrome c biogenesis ATP-binding export protein CcmA of Bordetella bronchiseptica (strain ATCC BAA-588 / NCTC 13252 / RB50) (Alcaligenes bronchisepticus).